The sequence spans 276 residues: uncharacterized protein (276 aa).

Residues 20–137 enclose the AB hydrolase-1 domain; sequence PVLIFIPGAN…PPINTFLPDS (118 aa). The segment at 57-76 is disordered; sequence GESELTEPLPDSASNPDSDY.

This sequence belongs to the AB hydrolase superfamily.

This is an uncharacterized protein from Staphylococcus aureus (strain COL).